The chain runs to 286 residues: Putative quercetin 2,3-dioxygenase PA2418 (286 aa).

Positions 61, 63, 105, and 107 each coordinate a divalent metal cation.

Belongs to the pirin family. It depends on a divalent metal cation as a cofactor.

The catalysed reaction is quercetin + O2 = 2-(3,4-dihydroxybenzoyloxy)-4,6-dihydroxybenzoate + CO. Its pathway is flavonoid metabolism; quercetin degradation. Its function is as follows. Putative quercetin 2,3-dioxygenase. The polypeptide is Putative quercetin 2,3-dioxygenase PA2418 (Pseudomonas aeruginosa (strain ATCC 15692 / DSM 22644 / CIP 104116 / JCM 14847 / LMG 12228 / 1C / PRS 101 / PAO1)).